Here is a 175-residue protein sequence, read N- to C-terminus: Phosphopantetheine adenylyltransferase (175 aa).

Substrate is bound at residue serine 10. Residues 10 to 11 and histidine 18 contribute to the ATP site; that span reads SF. The substrate site is built by lysine 42, leucine 74, and arginine 88. Residues 89–91, glutamate 99, and 124–130 contribute to the ATP site; these read GMR and WIFTSSS.

Belongs to the bacterial CoaD family. Homohexamer. Requires Mg(2+) as cofactor.

Its subcellular location is the cytoplasm. The enzyme catalyses (R)-4'-phosphopantetheine + ATP + H(+) = 3'-dephospho-CoA + diphosphate. It functions in the pathway cofactor biosynthesis; coenzyme A biosynthesis; CoA from (R)-pantothenate: step 4/5. Functionally, reversibly transfers an adenylyl group from ATP to 4'-phosphopantetheine, yielding dephospho-CoA (dPCoA) and pyrophosphate. The chain is Phosphopantetheine adenylyltransferase from Desulfatibacillum aliphaticivorans.